Here is a 343-residue protein sequence, read N- to C-terminus: Ribosomal RNA small subunit methyltransferase, chloroplastic (343 aa).

A chloroplast-targeting transit peptide spans 1-48; the sequence is MMNAVITSATINCNSLSPSWTCGDNSPSKLLLGEISAALSRRRTVKVS. Residues H78, M80, G105, E126, D151, and N183 each contribute to the S-adenosyl-L-methionine site.

This sequence belongs to the class I-like SAM-binding methyltransferase superfamily. rRNA adenine N(6)-methyltransferase family.

It is found in the plastid. Its subcellular location is the chloroplast. Required for methylation of the 3' adenosines in the small subunit of plastid rRNA. Essential for chloroplast biogenesis at low temperatures. The polypeptide is Ribosomal RNA small subunit methyltransferase, chloroplastic (Arabidopsis thaliana (Mouse-ear cress)).